The primary structure comprises 118 residues: V-type proton ATPase subunit G 2 (118 aa).

A disordered region spans residues Ala-23–Asn-91. Positions Gln-35–Phe-55 are enriched in basic and acidic residues. Polar residues-rich tracts occupy residues Gln-56–Leu-69 and Arg-78–Gln-89.

This sequence belongs to the V-ATPase G subunit family. In terms of assembly, V-ATPase is a heteromultimeric enzyme made up of two complexes: the ATP-hydrolytic V1 complex and the proton translocation V0 complex. The V1 complex consists of three catalytic AB heterodimers that form a heterohexamer, three peripheral stalks each consisting of EG heterodimers, one central rotor including subunits D and F, and the regulatory subunits C and H. The proton translocation complex V0 consists of the proton transport subunit a, a ring of proteolipid subunits c9c'', rotary subunit d, subunits e and f, and the accessory subunits ATP6AP1/Ac45 and ATP6AP2/PRR.

It is found in the melanosome. The protein localises to the cytoplasmic vesicle. It localises to the clathrin-coated vesicle membrane. Functionally, subunit of the V1 complex of vacuolar(H+)-ATPase (V-ATPase), a multisubunit enzyme composed of a peripheral complex (V1) that hydrolyzes ATP and a membrane integral complex (V0) that translocates protons. V-ATPase is responsible for acidifying and maintaining the pH of intracellular compartments and in some cell types, is targeted to the plasma membrane, where it is responsible for acidifying the extracellular environment. The protein is V-type proton ATPase subunit G 2 (Atp6v1g2) of Mus musculus (Mouse).